We begin with the raw amino-acid sequence, 488 residues long: Altronate oxidoreductase (488 aa).

Residue 18 to 29 (VIQFGEGNFLRA) participates in NAD(+) binding.

The protein belongs to the mannitol dehydrogenase family. UxaB subfamily.

The enzyme catalyses D-altronate + NAD(+) = keto-D-tagaturonate + NADH + H(+). It participates in carbohydrate metabolism; pentose and glucuronate interconversion. This chain is Altronate oxidoreductase, found in Pectobacterium carotovorum subsp. carotovorum (strain PC1).